Here is a 419-residue protein sequence, read N- to C-terminus: L-rhamnose isomerase (419 aa).

Mn(2+)-binding residues include histidine 262, aspartate 294, and aspartate 296.

Belongs to the rhamnose isomerase family. In terms of assembly, homotetramer. Requires Mn(2+) as cofactor.

It is found in the cytoplasm. The enzyme catalyses L-rhamnopyranose = L-rhamnulose. The protein operates within carbohydrate degradation; L-rhamnose degradation; glycerone phosphate from L-rhamnose: step 1/3. Its function is as follows. Catalyzes the interconversion of L-rhamnose and L-rhamnulose. The polypeptide is L-rhamnose isomerase (Escherichia fergusonii (strain ATCC 35469 / DSM 13698 / CCUG 18766 / IAM 14443 / JCM 21226 / LMG 7866 / NBRC 102419 / NCTC 12128 / CDC 0568-73)).